Reading from the N-terminus, the 842-residue chain is Elongation factor 2 (842 aa).

Residues 17–346 (TNVRNMSVIA…MIVLHLPSPV (330 aa)) enclose the tr-type G domain. GTP contacts are provided by residues 26–33 (AHVDHGKS), 158–161 (NKVD), and 213–215 (SGL). At histidine 699 the chain carries Diphthamide.

Belongs to the TRAFAC class translation factor GTPase superfamily. Classic translation factor GTPase family. EF-G/EF-2 subfamily.

Its subcellular location is the cytoplasm. The enzyme catalyses GTP + H2O = GDP + phosphate + H(+). In terms of biological role, catalyzes the GTP-dependent ribosomal translocation step during translation elongation. During this step, the ribosome changes from the pre-translocational (PRE) to the post-translocational (POST) state as the newly formed A-site-bound peptidyl-tRNA and P-site-bound deacylated tRNA move to the P and E sites, respectively. Catalyzes the coordinated movement of the two tRNA molecules, the mRNA and conformational changes in the ribosome. This Candida albicans (strain SC5314 / ATCC MYA-2876) (Yeast) protein is Elongation factor 2 (EFT2).